A 316-amino-acid polypeptide reads, in one-letter code: Pantothenate kinase (316 aa).

95-102 is an ATP binding site; sequence GSVAVGKS.

Belongs to the prokaryotic pantothenate kinase family.

The protein localises to the cytoplasm. The enzyme catalyses (R)-pantothenate + ATP = (R)-4'-phosphopantothenate + ADP + H(+). It functions in the pathway cofactor biosynthesis; coenzyme A biosynthesis; CoA from (R)-pantothenate: step 1/5. The chain is Pantothenate kinase from Salmonella agona (strain SL483).